The chain runs to 421 residues: 2-deoxystreptamine N-acetyl-D-glucosaminyltransferase (421 aa).

It belongs to the glycosyltransferase group 1 family. Glycosyltransferase 4 subfamily.

It catalyses the reaction 2-deoxystreptamine + UDP-N-acetyl-alpha-D-glucosamine = 2'-N-acetylparomamine + UDP + H(+). The protein operates within antibiotic biosynthesis; neomycin biosynthesis. Glycosyltransferase involved in the biosynthesis of neomycin by mediating conversion of 2-deoxystreptamine (2-DOS) to 2'-N-acetylparomamine using UDP-alpha-D-glucosamine as sugar donor. The protein is 2-deoxystreptamine N-acetyl-D-glucosaminyltransferase (neoD) of Streptomyces fradiae (Streptomyces roseoflavus).